Consider the following 59-residue polypeptide: Small ribosomal subunit protein bS21 (59 aa).

Residues Lys34–Phe59 are disordered. A compositionally biased stretch (basic residues) spans Val43–Phe59.

The protein belongs to the bacterial ribosomal protein bS21 family.

The polypeptide is Small ribosomal subunit protein bS21 (Desulforudis audaxviator (strain MP104C)).